The following is a 307-amino-acid chain: D-alanine--D-alanine ligase (307 aa).

Positions 101 to 301 constitute an ATP-grasp domain; sequence KTVMRAAGVS…FGELVRWMVE (201 aa). An ATP-binding site is contributed by 127 to 182; it reads PLTPPYVVKPIAEGSSMGVIIVRDERSHPPQILASDEWVYGEEVLAETYVAGRELT. 3 residues coordinate Mg(2+): D251, E268, and N270.

Belongs to the D-alanine--D-alanine ligase family. The cofactor is Mg(2+). Mn(2+) is required as a cofactor.

It localises to the cytoplasm. The enzyme catalyses 2 D-alanine + ATP = D-alanyl-D-alanine + ADP + phosphate + H(+). It participates in cell wall biogenesis; peptidoglycan biosynthesis. In terms of biological role, cell wall formation. This Methylorubrum extorquens (strain CM4 / NCIMB 13688) (Methylobacterium extorquens) protein is D-alanine--D-alanine ligase.